Reading from the N-terminus, the 2669-residue chain is Nucleosome-remodeling factor subunit NURF301 (2669 aa).

A compositionally biased stretch (basic residues) spans 1–12 (MSGRGSRKRGRP). The tract at residues 1 to 121 (MSGRGSRKRG…EEDKSDNEDD (121 aa)) is required for function in nucleosome sliding. A disordered region spans residues 1–125 (MSGRGSRKRG…SDNEDDMLLT (125 aa)). Residues 6–18 (SRKRGRPPKTPNE) constitute a DNA-binding region (a.T hook). Residues 38 to 56 (GKSQPSTPSASRGISPQSD) show a composition bias toward polar residues. A phosphoserine mark is found at S40, S52, S55, S59, and S62. Over residues 66–82 (HTNRSRGSAAKRGRGRK) the composition is skewed to basic residues. Acidic residues predominate over residues 109–125 (GDSEEDKSDNEDDMLLT). Positions 188–248 (NTHVLRALSI…LKAILREEDA (61 aa)) constitute a DDT domain. Residues 339 to 386 (DDHCRVCHRLGDLLCCETCPAVYHLECVDPPMNDVPTEDWQCGLCRSH) form a PHD-type 1 zinc finger. Positions 460 to 515 (RLHSQITERRDEIERQMKLTETLTNEHKHTKRSVIEIEQEAKNELLEKEVLDEDEK) form a coiled coil. Residues 505 to 538 (LEKEVLDEDEKDGDAKSESQSIEGTKKQEECKMV) form a disordered region. A compositionally biased stretch (basic and acidic residues) spans 528-537 (GTKKQEECKM). Residues 688-720 (LQRITSAEREERKKLEKREKRERDDEEERNRLA) are a coiled coil. 3 disordered regions span residues 1026 to 1048 (EGKRESTQVAVDDSEEGKPAESE), 1135 to 1159 (TGLNSGNAEDVDMTPGWRRKRNQKS), and 1406 to 1425 (RSGLRKRKRAESPQPTEPQI). Residue S1417 is modified to Phosphoserine. The residue at position 1527 (T1527) is a Phosphothreonine. The segment covering 1559-1590 (SRTGGANTAAAAASPTVGGSTSTQSNPSTSTP) has biased composition (low complexity). 3 disordered regions span residues 1559 to 1596 (SRTGGANTAAAAASPTVGGSTSTQSNPSTSTPHKVQII), 2181 to 2203 (INNGDDQENSKCAETENSNITTN), and 2283 to 2307 (TNEWETCSRGSVNEEALTPSRQTDD). Residues 2283–2293 (TNEWETCSRGS) show a composition bias toward polar residues. A coiled-coil region spans residues 2338-2373 (KNDEVAELGEQKQSQLERHKELLKKNILRKRSLLER). Residues 2382 to 2432 (DVKTKVQRHVRPLSNASPDEQSENERSGEPNLDFKRTEVQNPRHGAGRPKK) are disordered. Phosphoserine occurs at positions 2395, 2398, and 2403. Positions 2404–2419 (ENERSGEPNLDFKRTE) are enriched in basic and acidic residues. The PHD-type 2 zinc-finger motif lies at 2481 to 2546 (EFICIDCKRA…EYVCPECQRK (66 aa)). The 105-residue stretch at 2556–2660 (KLTSNDVEEL…SYFVQKIKNF (105 aa)) folds into the Bromo domain.

This sequence belongs to the BPTF family. As to quaternary structure, component of the NURF complex composed of Caf1-55, E(bx), Nurf-38 and Iswi. Interacts with Trl. Interacts with histone H3-K4Me3.

It is found in the nucleus. Its function is as follows. Histone-binding component of NURF (nucleosome remodeling factor), a complex which catalyzes ATP-dependent nucleosome sliding and facilitates transcription of chromatin. Specifically recognizes H3 tails trimethylated on 'Lys-4' (H3K4me3), which mark transcription start sites of virtually all active genes. Required for homeotic gene expression, proper larval blood cell development, normal male X chromosome morphology, ecdysteroid signaling and metamorphosis. The chain is Nucleosome-remodeling factor subunit NURF301 (E(bx)) from Drosophila melanogaster (Fruit fly).